The primary structure comprises 94 residues: Protein FAM24B (94 aa).

Residues Met1–Cys21 form the signal peptide.

Belongs to the FAM24 family.

Its subcellular location is the secreted. The sequence is that of Protein FAM24B (FAM24B) from Homo sapiens (Human).